The sequence spans 86 residues: Latartoxin-1b (86 aa).

The first 19 residues, 1 to 19 (MKILVLAVVCTVLLQVALS), serve as a signal peptide directing secretion. Residues 20 to 26 (ADSEEVR) constitute a propeptide, removed in mature form. The Processing quadruplet motif signature appears at 23–26 (EEVR). Intrachain disulfides connect cysteine 28–cysteine 43, cysteine 35–cysteine 48, cysteine 42–cysteine 65, and cysteine 50–cysteine 63.

It belongs to the neurotoxin 19 (CSTX) family. Post-translationally, contains 4 disulfide bonds. In terms of processing, cleavage of the propeptide depends on the processing quadruplet motif (XXXR, with at least one of X being E). Expressed by the venom gland.

The protein resides in the secreted. Functionally, insect toxin. The protein is Latartoxin-1b of Lachesana tarabaevi (Spider).